The sequence spans 434 residues: Transcription factor AP-2-epsilon (434 aa).

The interval 30 to 123 (LNQGPYSSAP…GLSLDPRRDY (94 aa)) is disordered. Residues 52–62 (PYFPPPYPQPP) are compositionally biased toward pro residues. Positions 53 to 58 (YFPPPY) match the PPxY motif motif. Polar residues predominate over residues 81–97 (SSINSIHHQHQQPSWHT). The interval 278–408 (RRKAANVTLL…YLLESLKGMD (131 aa)) is H-S-H (helix-span-helix), dimerization. The tract at residues 415–434 (TGNGHSAAESKSEKDIKHRK) is disordered. Residues 422–434 (AESKSEKDIKHRK) show a composition bias toward basic and acidic residues.

It belongs to the AP-2 family. Binds DNA as a dimer. Can form homodimers or heterodimers with other AP-2 family members.

The protein localises to the nucleus. In terms of biological role, sequence-specific DNA-binding protein that interacts with inducible viral and cellular enhancer elements to regulate transcription of selected genes. AP-2 factors bind to the consensus sequence 5'-GCCNNNGGC-3' and activate genes involved in a large spectrum of important biological functions. This chain is Transcription factor AP-2-epsilon, found in Xenopus laevis (African clawed frog).